The following is a 399-amino-acid chain: STOREKEEPER protein (399 aa).

2 disordered regions span residues 1-160 (MAPK…RSLW) and 250-301 (GISN…EEQQ). Over residues 20 to 54 (EEQELVEESQEEEEQQSREEEGEEESGEETEEDEE) the composition is skewed to acidic residues. The segment covering 69–79 (KLVQTPQKPQF) has biased composition (polar residues). Low complexity-rich tracts occupy residues 80 to 100 (SSESGSENGSGSDSEAESGNS) and 116 to 125 (AAKAATPSKP). 2 stretches are compositionally biased toward basic and acidic residues: residues 143 to 152 (KIAEEEEKKS) and 270 to 299 (KTVEVKKSSEPKKSAKVSKPKDDEKQKEEE).

The protein belongs to the GeBP family. In terms of tissue distribution, expressed in tubers and in leaves treated with sucrose.

It localises to the nucleus. Its function is as follows. May act as a transcriptional regulator. Binds specifically to the B-box motif, a promoter element that is required for the tuber-specific and sucrose inducible expression of the patatin gene. The protein is STOREKEEPER protein of Solanum tuberosum (Potato).